Consider the following 213-residue polypeptide: MSDFRQDFIRFAVEEQVLRFGEFVTKAGRPSPYFFNAGLFNHGASLLSLARFYARSISESGIAFDMLFGPAYKGIVLAGATAMMLAEQGRDVPFAFNRKEAKDHGEGGTLIGAPLKGRVLIIDDVISAGTSVRESVEIIRANGAEPAGVAIALDRMERGQGELSATQEVAQKFGLPVVAIASLDDLLGFLAGSPDLADNLTRVEAYRTQYGVR.

Residue K26 participates in 5-phospho-alpha-D-ribose 1-diphosphate binding. Orotate is bound at residue 34–35 (FF). Residues 72-73 (YK), R98, K99, K102, H104, and 123-131 (DDVISAGTS) each bind 5-phospho-alpha-D-ribose 1-diphosphate. Positions 127 and 155 each coordinate orotate.

The protein belongs to the purine/pyrimidine phosphoribosyltransferase family. PyrE subfamily. In terms of assembly, homodimer. Mg(2+) is required as a cofactor.

It catalyses the reaction orotidine 5'-phosphate + diphosphate = orotate + 5-phospho-alpha-D-ribose 1-diphosphate. It functions in the pathway pyrimidine metabolism; UMP biosynthesis via de novo pathway; UMP from orotate: step 1/2. Its function is as follows. Catalyzes the transfer of a ribosyl phosphate group from 5-phosphoribose 1-diphosphate to orotate, leading to the formation of orotidine monophosphate (OMP). The sequence is that of Orotate phosphoribosyltransferase from Laribacter hongkongensis (strain HLHK9).